The chain runs to 102 residues: YcgL domain-containing protein MS1047 (102 aa).

The YcgL domain occupies 1-85; the sequence is MLCAIYKSKK…KQESLFEQFK (85 aa).

This Mannheimia succiniciproducens (strain KCTC 0769BP / MBEL55E) protein is YcgL domain-containing protein MS1047.